A 258-amino-acid polypeptide reads, in one-letter code: MKKLSTVIIILILEIVFHNMNYVNAQPDPKLDELNKVSDYKNNKGTMGNVMNLYTSPPVEGRGVINSRQFLSHDLIFPIEYKSYNEVKTELENTELANNYKDKKVDIFGVPYFYTCIIPKSEPDINQNFGGCCMYGGLTFNSSENERDKLITVQVTIDNRQSLGFTITTNKNMVTIQELDYKARHWLTKEKKLYEFDGSAFESGYIKFTEKNNTSFWFDLFPKKELVPFVPYKFLNIYGDNKVVDSKSIKMEVFLNTH.

An N-terminal signal peptide occupies residues 1–25 (MKKLSTVIIILILEIVFHNMNYVNA). A disulfide bridge connects residues Cys116 and Cys133.

Belongs to the staphylococcal/streptococcal toxin family.

The protein localises to the secreted. Staphylococcal enterotoxins cause the intoxication staphylococcal food poisoning syndrome. The illness is characterized by high fever, hypotension, diarrhea, shock, and in some cases death. This Staphylococcus aureus (strain N315) protein is Enterotoxin type G (entG).